A 298-amino-acid chain; its full sequence is MQLSRVRSVLLDVFALAKVKQTLLLLFTMYTAYIVGGGLGKPYERHLVVLTLGFITIAAVTALNMYFDRDIDALMERTRDRPLPAGRLDPLKVFIATVAATIVSVILAWRIINPHFALAIVIGFLFDIVAYTYLLKRRTPLSIIAGAVAGGAPALGGWAAAAGRIDVNALLFSLIVATWVPSHIWFLATYYRDDYRRANVPMLPVVADTPIAVASGIGLGSLVMGYSIVGLWVNNVIGTVSLIVGVIAAIAIFHLAVKYAELGGDPNYSRTAFKKTNMMLGLVFLVMMLEKVVSYIIS.

A run of 9 helical transmembrane segments spans residues 23-43 (LLLL…GKPY), 47-67 (LVVL…NMYF), 93-113 (VFIA…RIIN), 115-135 (HFAL…TYLL), 143-163 (IIAG…AAAG), 169-189 (ALLF…FLAT), 211-231 (IAVA…IVGL), 236-256 (VIGT…FHLA), and 278-298 (MMLG…YIIS).

Belongs to the UbiA prenyltransferase family. Protoheme IX farnesyltransferase subfamily.

The protein localises to the cell membrane. The enzyme catalyses heme b + (2E,6E)-farnesyl diphosphate + H2O = Fe(II)-heme o + diphosphate. The protein operates within porphyrin-containing compound metabolism; heme O biosynthesis; heme O from protoheme: step 1/1. Converts heme B (protoheme IX) to heme O by substitution of the vinyl group on carbon 2 of heme B porphyrin ring with a hydroxyethyl farnesyl side group. This is Protoheme IX farnesyltransferase from Hyperthermus butylicus (strain DSM 5456 / JCM 9403 / PLM1-5).